A 248-amino-acid polypeptide reads, in one-letter code: Large ribosomal subunit protein uL4 (248 aa).

The disordered stretch occupies residues histidine 69–histidine 92.

Belongs to the universal ribosomal protein uL4 family. As to quaternary structure, part of the 50S ribosomal subunit.

One of the primary rRNA binding proteins, this protein initially binds near the 5'-end of the 23S rRNA. It is important during the early stages of 50S assembly. It makes multiple contacts with different domains of the 23S rRNA in the assembled 50S subunit and ribosome. In terms of biological role, forms part of the polypeptide exit tunnel. This chain is Large ribosomal subunit protein uL4, found in Methanoregula boonei (strain DSM 21154 / JCM 14090 / 6A8).